The sequence spans 468 residues: Ribulose bisphosphate carboxylase large chain (468 aa).

Lys5 is modified (N6,N6,N6-trimethyllysine). Substrate is bound by residues Asn114 and Thr164. Lys166 functions as the Proton acceptor in the catalytic mechanism. Position 168 (Lys168) interacts with substrate. Mg(2+) contacts are provided by Lys192, Asp194, and Glu195. Residue Lys192 is modified to N6-carboxylysine. The active-site Proton acceptor is His285. 3 residues coordinate substrate: Arg286, His318, and Ser370.

Belongs to the RuBisCO large chain family. Type I subfamily. Heterohexadecamer of 8 large chains and 8 small chains; disulfide-linked. The disulfide link is formed within the large subunit homodimers. It depends on Mg(2+) as a cofactor. Post-translationally, the disulfide bond which can form in the large chain dimeric partners within the hexadecamer appears to be associated with oxidative stress and protein turnover.

The protein localises to the plastid. It is found in the chloroplast. It carries out the reaction 2 (2R)-3-phosphoglycerate + 2 H(+) = D-ribulose 1,5-bisphosphate + CO2 + H2O. It catalyses the reaction D-ribulose 1,5-bisphosphate + O2 = 2-phosphoglycolate + (2R)-3-phosphoglycerate + 2 H(+). RuBisCO catalyzes two reactions: the carboxylation of D-ribulose 1,5-bisphosphate, the primary event in carbon dioxide fixation, as well as the oxidative fragmentation of the pentose substrate in the photorespiration process. Both reactions occur simultaneously and in competition at the same active site. The sequence is that of Ribulose bisphosphate carboxylase large chain from Anthocercis viscosa (Sticky tailflower).